The sequence spans 316 residues: Aspartate carbamoyltransferase catalytic subunit (316 aa).

Carbamoyl phosphate is bound by residues Arg60 and Thr61. L-aspartate is bound at residue Lys88. Residues Arg110, His138, and Gln141 each coordinate carbamoyl phosphate. 2 residues coordinate L-aspartate: Arg171 and Arg225. Residues Gly266 and Pro267 each contribute to the carbamoyl phosphate site.

The protein belongs to the aspartate/ornithine carbamoyltransferase superfamily. ATCase family. Heterododecamer (2C3:3R2) of six catalytic PyrB chains organized as two trimers (C3), and six regulatory PyrI chains organized as three dimers (R2).

It carries out the reaction carbamoyl phosphate + L-aspartate = N-carbamoyl-L-aspartate + phosphate + H(+). It participates in pyrimidine metabolism; UMP biosynthesis via de novo pathway; (S)-dihydroorotate from bicarbonate: step 2/3. Its function is as follows. Catalyzes the condensation of carbamoyl phosphate and aspartate to form carbamoyl aspartate and inorganic phosphate, the committed step in the de novo pyrimidine nucleotide biosynthesis pathway. This chain is Aspartate carbamoyltransferase catalytic subunit, found in Rhizorhabdus wittichii (strain DSM 6014 / CCUG 31198 / JCM 15750 / NBRC 105917 / EY 4224 / RW1) (Sphingomonas wittichii).